We begin with the raw amino-acid sequence, 134 residues long: Ribosome-binding factor A (134 aa).

This sequence belongs to the RbfA family. In terms of assembly, monomer. Binds 30S ribosomal subunits, but not 50S ribosomal subunits or 70S ribosomes.

It localises to the cytoplasm. One of several proteins that assist in the late maturation steps of the functional core of the 30S ribosomal subunit. Associates with free 30S ribosomal subunits (but not with 30S subunits that are part of 70S ribosomes or polysomes). Required for efficient processing of 16S rRNA. May interact with the 5'-terminal helix region of 16S rRNA. In Tolumonas auensis (strain DSM 9187 / NBRC 110442 / TA 4), this protein is Ribosome-binding factor A.